We begin with the raw amino-acid sequence, 245 residues long: RAD51-like protein 1 (245 aa).

In terms of assembly, interacts with brc-2 and rad-51.

Its subcellular location is the nucleus. Has a role in the homologous recombination repair (HRR) of genomic DNA during meiosis. Required for rad-51 recruitment onto ssDNA gaps generated at stalled replication fork barriers. In Caenorhabditis elegans, this protein is RAD51-like protein 1 (rfs-1).